The chain runs to 1516 residues: Mediator of RNA polymerase II transcription subunit 14 (1516 aa).

2 disordered regions span residues 22–98 (LSSQ…EVPA) and 1434–1516 (MHRQ…YPPQ). A compositionally biased stretch (low complexity) spans 34–47 (SPAAPISPAPSGSA). Residues 72-83 (SEVDVKSIHSSD) are compositionally biased toward basic and acidic residues. Residues 1463–1473 (SHQQHMMNPGS) are compositionally biased toward low complexity. Positions 1474–1483 (VGPGSVGGPG) are enriched in gly residues. A compositionally biased stretch (low complexity) spans 1502 to 1516 (QSYHHPLHHQQYPPQ).

The protein belongs to the Mediator complex subunit 14 family. In terms of assembly, component of the Mediator complex.

It is found in the nucleus. Functionally, component of the Mediator complex, a coactivator involved in the regulated transcription of nearly all RNA polymerase II-dependent genes. Mediator functions as a bridge to convey information from gene-specific regulatory proteins to the basal RNA polymerase II transcription machinery. Mediator is recruited to promoters by direct interactions with regulatory proteins and serves as a scaffold for the assembly of a functional preinitiation complex with RNA polymerase II and the general transcription factors. Required for transcription in the embryo and for phosphorylation of the RNA polymerase II C-terminal domain repeat. This chain is Mediator of RNA polymerase II transcription subunit 14 (rgr-1), found in Caenorhabditis elegans.